A 118-amino-acid polypeptide reads, in one-letter code: Ribonuclease P protein component (118 aa).

The protein belongs to the RnpA family. In terms of assembly, consists of a catalytic RNA component (M1 or rnpB) and a protein subunit.

It carries out the reaction Endonucleolytic cleavage of RNA, removing 5'-extranucleotides from tRNA precursor.. RNaseP catalyzes the removal of the 5'-leader sequence from pre-tRNA to produce the mature 5'-terminus. It can also cleave other RNA substrates such as 4.5S RNA. The protein component plays an auxiliary but essential role in vivo by binding to the 5'-leader sequence and broadening the substrate specificity of the ribozyme. The polypeptide is Ribonuclease P protein component (Vibrio parahaemolyticus serotype O3:K6 (strain RIMD 2210633)).